Consider the following 220-residue polypeptide: GTP cyclohydrolase 1 (220 aa).

Zn(2+) contacts are provided by Cys-110, His-113, and Cys-181.

Belongs to the GTP cyclohydrolase I family. In terms of assembly, toroid-shaped homodecamer, composed of two pentamers of five dimers.

The catalysed reaction is GTP + H2O = 7,8-dihydroneopterin 3'-triphosphate + formate + H(+). It participates in cofactor biosynthesis; 7,8-dihydroneopterin triphosphate biosynthesis; 7,8-dihydroneopterin triphosphate from GTP: step 1/1. This chain is GTP cyclohydrolase 1, found in Baumannia cicadellinicola subsp. Homalodisca coagulata.